The following is a 230-amino-acid chain: Small ribosomal subunit protein uS3c (230 aa).

The 71-residue stretch at 39–109 (IRSFIHGKLS…QIRVNVVEIS (71 aa)) folds into the KH type-2 domain.

Belongs to the universal ribosomal protein uS3 family. In terms of assembly, part of the 30S ribosomal subunit.

Its subcellular location is the plastid. It localises to the chloroplast. The polypeptide is Small ribosomal subunit protein uS3c (rps3) (Porphyra purpurea (Red seaweed)).